We begin with the raw amino-acid sequence, 319 residues long: Oxaloacetate tautomerase fahd2, mitochondrial (319 aa).

Residues 1 to 31 constitute a mitochondrion transit peptide; that stretch reads MLTQTRVALRVLKNAHLTLPKRNISQSPALS. 3 residues coordinate Mg(2+): glutamate 164, glutamate 166, and aspartate 195.

This sequence belongs to the FAH family. Requires Mg(2+) as cofactor. Mn(2+) is required as a cofactor.

The protein localises to the mitochondrion. The enzyme catalyses oxaloacetate = enol-oxaloacetate. Functionally, tautomerase that converts enol-oxaloacetate, a strong inhibitor of succinate dehydrogenase, to the physiological keto form of oxaloacetate. It is thereby required to maximize aerobic respiration efficiency by preventing succinate dehydrogenase inhibition. This Xenopus laevis (African clawed frog) protein is Oxaloacetate tautomerase fahd2, mitochondrial (fahd2).